A 176-amino-acid chain; its full sequence is ATP-dependent protease subunit HslV (176 aa).

The active site involves threonine 2. Na(+) contacts are provided by glycine 157, cysteine 160, and threonine 163.

Belongs to the peptidase T1B family. HslV subfamily. As to quaternary structure, a double ring-shaped homohexamer of HslV is capped on each side by a ring-shaped HslU homohexamer. The assembly of the HslU/HslV complex is dependent on binding of ATP.

The protein localises to the cytoplasm. It carries out the reaction ATP-dependent cleavage of peptide bonds with broad specificity.. Its activity is regulated as follows. Allosterically activated by HslU binding. Protease subunit of a proteasome-like degradation complex believed to be a general protein degrading machinery. This Pseudomonas syringae pv. tomato (strain ATCC BAA-871 / DC3000) protein is ATP-dependent protease subunit HslV.